A 127-amino-acid chain; its full sequence is MSCLLIVARTTSGKLCWCWNPFSTTLKTSAEMMMKMKIMWTIARATKKAYLAGMWKEMIMWLSVILSLIQGSLHWKKYVKLLQDRNGYKEKSKEKKQDPAFSFEPWRMLMHSLFIWYQIVVQMIYIC.

The protein is Putative platinum sensitivity protein 1 (PSY1) of Saccharomyces cerevisiae (strain ATCC 204508 / S288c) (Baker's yeast).